Reading from the N-terminus, the 260-residue chain is Carbonic anhydrase 2 (260 aa).

Residues His-3–Phe-259 form the Alpha-carbonic anhydrase domain. His-64 (proton donor/acceptor) is an active-site residue. Positions 94, 96, and 119 each coordinate Zn(2+). Thr-198–Thr-199 serves as a coordination point for substrate.

This sequence belongs to the alpha-carbonic anhydrase family. It depends on Zn(2+) as a cofactor.

It is found in the cytoplasm. The protein resides in the cell membrane. The enzyme catalyses hydrogencarbonate + H(+) = CO2 + H2O. It catalyses the reaction urea = cyanamide + H2O. Inhibited by acetazolamide. Catalyzes the reversible hydration of carbon dioxide. Can also hydrate cyanamide to urea. In Gallus gallus (Chicken), this protein is Carbonic anhydrase 2 (CA2).